The following is a 379-amino-acid chain: Very late expression factor 1 (379 aa).

The Tyr recombinase domain occupies 169–348; that stretch reads VIDTILNFIN…YNIGLDETSS (180 aa). Residues R210, K239, R303, and H326 contribute to the active site. Y335 functions as the O-(3'-phospho-DNA)-tyrosine intermediate in the catalytic mechanism. A compositionally biased stretch (acidic residues) spans 346 to 358; that stretch reads TSSEEENNNDDDD. Positions 346 to 379 are disordered; that stretch reads TSSEEENNNDDDDAQHNRNSSGSSGESLLYYRNE. The span at 362 to 379 shows a compositional bias: low complexity; that stretch reads NRNSSGSSGESLLYYRNE.

The protein belongs to the 'phage' integrase family.

Plays a role in nucleocapsid assembly and serves an essential function during the final stages of the DNA packaging process. Participates in the processing of branched DNA molecules at the late stages of viral genome replication. This is Very late expression factor 1 (VLF-1) from Lepidoptera (butterflies and moths).